The chain runs to 254 residues: Proteasome subunit alpha (254 aa).

The disordered stretch occupies residues 232–254; sequence PEVDSSESSNEAEAGAEKGSGES.

Belongs to the peptidase T1A family. The 20S proteasome core is composed of 14 alpha and 14 beta subunits that assemble into four stacked heptameric rings, resulting in a barrel-shaped structure. The two inner rings, each composed of seven catalytic beta subunits, are sandwiched by two outer rings, each composed of seven alpha subunits. The catalytic chamber with the active sites is on the inside of the barrel. Has a gated structure, the ends of the cylinder being occluded by the N-termini of the alpha-subunits. Is capped by the proteasome-associated ATPase, ARC.

The protein localises to the cytoplasm. The protein operates within protein degradation; proteasomal Pup-dependent pathway. With respect to regulation, the formation of the proteasomal ATPase ARC-20S proteasome complex, likely via the docking of the C-termini of ARC into the intersubunit pockets in the alpha-rings, may trigger opening of the gate for substrate entry. Interconversion between the open-gate and close-gate conformations leads to a dynamic regulation of the 20S proteasome proteolysis activity. Component of the proteasome core, a large protease complex with broad specificity involved in protein degradation. In Mycolicibacterium vanbaalenii (strain DSM 7251 / JCM 13017 / BCRC 16820 / KCTC 9966 / NRRL B-24157 / PYR-1) (Mycobacterium vanbaalenii), this protein is Proteasome subunit alpha.